The chain runs to 1835 residues: MANSTGKAPPDERRKGLAFLDELRQFHHSRGSPFKKIPAVGGKELDLHGLYTRVTTLGGFAKVSEKNQWGEIVEEFNFPRSCSNAAFALKQYYLRYLEKYEKVHHFGEDDDEVPPGNPKPQLPIGAIPSSYNYQQHSVSDYLRQSYGLSMDFNSPNDYNKLVLSLLSGLPNEVDFAINVCTLLSNESKHVMQLEKDPKIITLLLANAGVFDDTLGSFSTVFGEEWKEKTDRDFVKFWKDIVDDNEVRDLISDRNKSHEGTSGEWIWESLFHPPRKLGINDIEGQRVLQIAVILRNLSFEEGNVKLLAANRTCLRFLLLSAHSHFISLRQLGLDTLGNIAAELLLDPVDFKTTHLMFHTVTKCLMSRDRFLKMRGMEILGNLCKAEDNGVLICEYVDQDSYREIICHLTLPDVLLVISTLEVLYMLTEMGDVACTKIAKVEKSIDMLVCLVSMDIQMFGPDALAAVKLIEHPSSSHQMLSEIRPQAIEQVQTQTHVASAPASRAVVAQHVAPPPGIVEIDSEKFACQWLNAHFEVNPDCSVSRAEMYSEYLSTCSKLARGGILTSTGFYKCLRTVFPNHTVKRVEDSSSNGQAHIHVVGVKRRAIPLPIQMYYQQQPVSTSVVRVDSVPDVSPAPSPAGIPHGSQTIGNHFQRTPVANQSSNLTATQMSFPVQGVHTVAQTVSRIPQNPSPHTHQQQNAPVTVIQSKAPIPCEVVKATVIQNSIPQTGVPVSIAVGGGPPQSSVVQNHSTGPQPVTVVNSQTLLHHPSVIPQQSPLHTVVPGQIPSGTPVTVIQQAVPQSHMFGRVQNIPACTSTVSQGQQLITTSPQPVQTSSQQTSAGSQSQDTVIIAPPQYVTTSASNIVSATSVQNFQVATGQMVTIAGVPSPQASRVGFQNIAPKPLPSQQVSSTVVQQPIQQPQQPTQQSVVIVSQPAQQGQTYAPAIHQIVLANPAALPAGQTVQLTGQPNITPSSSPSPVPATNNQVPTAMSSSSTPQSQGPPPTVSQMLSVKRQQQQQHSPAPPPQQVQVQVQQPQQVQMQVQPQQSNAGVGQPASGESSLIKQLLLPKRGPSTPGGKLILPAPQIPPPNNARAPSPQVVYQVASNQAAGFGVQGQTPAQQLLVGQQNVQLVPSAMPPSGGVQTVPISNLQILPGPLISNSPATIFQGTSGNQVTITVVPNTSFAPATVSQGNATQLIAPAGITMSGTQTGVGLPVQTLPATQASPAGQSSCTTATPPFKGDKIICQKEEEAKEATGLHVHERKIEVMENPSCRRGATNTSNGDTKENEMHVGSLLNGRKYSDSSLPPSNSGKIQSETNQCSLISNGPSLELGENGASGKQNSEQIDMQDIKSDLRKPLVNGICDFDKGDGSHLSKNIPNHKTSNHVGNGEISPMEPQGTLDITQQDTAKGDQLERISNGPVLTLGGSSVSSIQEASNAATQQFSGTDLLNGPLASSLNSDVPQQRPSVVVSPHSTTSVIQGHQIIAVPDSGSKVSHSPALSSDVRSTNGTAECKTVKRPAEDTDRETVAGIPNKVGVRIVTISDPNNAGCSATMVAVPAGADPSTVAKVAIESAVQQKQQHPPTYVQNVVPQNTPMPPSPAVQVQGQPNSSQPSPFSGSSQPGDPMRKPGQNFMCLWQSCKKWFQTPSQVFYHAATEHGGKDVYPGQCLWEGCEPFQRQRFSFITHLQDKHCSKDALLAGLKQDEPGQAGSQKSSTKQPTVGGTSSTPRAQKAIVNHPSAALMALRRGSRNLVFRDFTDEKEGPITKHIRLTAALILKNIGKYSECGRRLLKRHENNLSVLAISNMEASSTLAKCLYELNFTVQSKEQEKDSEMLQ.

Ala-2 bears the N-acetylalanine mark. Ser-4 is modified (phosphoserine). Residues Lys-7, Lys-15, and Lys-119 each participate in a glycyl lysine isopeptide (Lys-Gly) (interchain with G-Cter in SUMO2) cross-link. The ARID domain occupies 13-105 (RRKGLAFLDE…YLEKYEKVHH (93 aa)). The short motif at 313–317 (LRFLL) is the LXXLL element. Positions 524 to 603 (ACQWLNAHFE…IHVVGVKRRA (80 aa)) form a DNA-binding region, RFX-type winged-helix. Lys-555 participates in a covalent cross-link: Glycyl lysine isopeptide (Lys-Gly) (interchain with G-Cter in SUMO2). Phosphoserine occurs at positions 631 and 635. Phosphothreonine is present on Thr-653. At Ser-689 the chain carries Phosphoserine. Thr-692 is subject to Phosphothreonine. Disordered stretches follow at residues 819–844 (QQLI…QSQD), 962–1057 (LTGQ…SGES), 1266–1287 (MENP…KENE), 1295–1314 (NGRK…KIQS), and 1321–1341 (LISN…KQNS). Composition is skewed to low complexity over residues 823–843 (TTSP…SQSQ), 985–996 (PTAMSSSSTPQS), and 1025–1044 (QVQV…QPQQ). The residue at position 1300 (Ser-1300) is a Phosphoserine. Residues 1301–1314 (DSSLPPSNSGKIQS) show a composition bias toward polar residues. Phosphoserine is present on residues Ser-1391 and Ser-1496. 2 disordered regions span residues 1488–1522 (DSGS…AEDT) and 1572–1629 (SAVQ…RKPG). The segment covering 1491 to 1509 (SKVSHSPALSSDVRSTNGT) has biased composition (polar residues). A compositionally biased stretch (basic and acidic residues) spans 1513 to 1522 (KTVKRPAEDT). Positions 1573 to 1592 (AVQQKQQHPPTYVQNVVPQN) are enriched in polar residues. Residues 1602-1623 (QVQGQPNSSQPSPFSGSSQPGD) are compositionally biased toward low complexity. Residues 1632 to 1657 (FMCLWQSCKKWFQTPSQVFYHAATEH) form a C2H2-type zinc finger. Glycyl lysine isopeptide (Lys-Gly) (interchain with G-Cter in SUMO2) cross-links involve residues Lys-1701, Lys-1716, and Lys-1731. The interval 1703–1728 (DEPGQAGSQKSSTKQPTVGGTSSTPR) is disordered. Residues 1708–1728 (AGSQKSSTKQPTVGGTSSTPR) show a composition bias toward polar residues.

Component of the SWI/SNF-B (PBAF) chromatin remodeling complex, at least composed of SMARCA4/BRG1, SMARCB1/BAF47/SNF5, ACTL6A/BAF53A or ACTL6B/BAF53B, SMARCE1/BAF57, SMARCD1/BAF60A, SMARCD2/BAF60B, perhaps SMARCD3/BAF60C, SMARCC1/BAF155, SMARCC2/BAF170, PBRM1/BAF180, ARID2/BAF200 and actin. Interacts with SRF. Forms complexes with SRF and SRF cofactors MYOCD, NKX2-5 and SRFBP1. As to expression, highly expressed in heart.

The protein resides in the nucleus. In terms of biological role, involved in transcriptional activation and repression of select genes by chromatin remodeling (alteration of DNA-nucleosome topology). Required for the stability of the SWI/SNF chromatin remodeling complex SWI/SNF-B (PBAF). May be involved in targeting the complex to different genes. May be involved in regulating transcriptional activation of cardiac genes. The chain is AT-rich interactive domain-containing protein 2 from Homo sapiens (Human).